The following is a 244-amino-acid chain: Geranylgeranylglyceryl phosphate synthase (244 aa).

Residues aspartate 20 and serine 49 each contribute to the Mg(2+) site. Residues 169–175, 200–201, and 222–223 contribute to the sn-glycerol 1-phosphate site; these read YLEAGSG, GG, and GT.

Belongs to the GGGP/HepGP synthase family. Group II subfamily. Requires Mg(2+) as cofactor.

The protein localises to the cytoplasm. The catalysed reaction is sn-glycerol 1-phosphate + (2E,6E,10E)-geranylgeranyl diphosphate = sn-3-O-(geranylgeranyl)glycerol 1-phosphate + diphosphate. The protein operates within membrane lipid metabolism; glycerophospholipid metabolism. Prenyltransferase that catalyzes the transfer of the geranylgeranyl moiety of geranylgeranyl diphosphate (GGPP) to the C3 hydroxyl of sn-glycerol-1-phosphate (G1P). This reaction is the first ether-bond-formation step in the biosynthesis of archaeal membrane lipids. This is Geranylgeranylglyceryl phosphate synthase from Korarchaeum cryptofilum (strain OPF8).